Reading from the N-terminus, the 387-residue chain is Involucrin (387 aa).

Disordered regions lie at residues 1–319 and 347–387; these read MSQQ…VHLG and VCIP…LKQE. Over residues 28–37 the composition is skewed to polar residues; the sequence is NTQQDQMKQP. The segment covering 62–71 has biased composition (low complexity); that stretch reads QVPEQECEPQ. Basic and acidic residues-rich tracts occupy residues 85–96, 104–115, 147–179, and 231–245; these read KQQEPQEQEVHP, QEQEAHLGKKQE, QEVH…KQLQ, and QLEK…ELHL.

This sequence belongs to the involucrin family. Directly or indirectly cross-linked to cornifelin (CNFN). Post-translationally, substrate of transglutaminase. Specific glutamines or lysines are cross-linked to keratins, desmoplakin and to inter involucrin molecules. Keratinocytes of epidermis and other stratified squamous epithelia.

The protein localises to the cytoplasm. Its function is as follows. Part of the insoluble cornified cell envelope (CE) of stratified squamous epithelia. In Cephalopachus bancanus (Western tarsier), this protein is Involucrin (IVL).